Reading from the N-terminus, the 380-residue chain is Ribosomal RNA large subunit methyltransferase F (380 aa).

Disordered stretches follow at residues methionine 1–alanine 54 and serine 260–lysine 279. Residues glutamine 21–lysine 32 are compositionally biased toward low complexity. The segment covering glutamine 44 to asparagine 53 has biased composition (basic residues). The span at serine 260–serine 270 shows a compositional bias: low complexity.

It belongs to the methyltransferase superfamily. METTL16/RlmF family.

It is found in the cytoplasm. The catalysed reaction is adenosine(1618) in 23S rRNA + S-adenosyl-L-methionine = N(6)-methyladenosine(1618) in 23S rRNA + S-adenosyl-L-homocysteine + H(+). In terms of biological role, specifically methylates the adenine in position 1618 of 23S rRNA. The protein is Ribosomal RNA large subunit methyltransferase F of Shewanella pealeana (strain ATCC 700345 / ANG-SQ1).